The sequence spans 165 residues: Lipoprotein signal peptidase (165 aa).

4 helical membrane passes run 11-31 (YWVL…AVLS), 41-61 (VIPS…FSFL), 64-84 (QGGW…AYLV), and 92-112 (FATL…GNVI). Active-site residues include D122 and D140. A helical membrane pass occupies residues 132–152 (FYPAFNIADSFICVGAVLAVL).

This sequence belongs to the peptidase A8 family.

It localises to the cell inner membrane. The enzyme catalyses Release of signal peptides from bacterial membrane prolipoproteins. Hydrolyzes -Xaa-Yaa-Zaa-|-(S,diacylglyceryl)Cys-, in which Xaa is hydrophobic (preferably Leu), and Yaa (Ala or Ser) and Zaa (Gly or Ala) have small, neutral side chains.. Its pathway is protein modification; lipoprotein biosynthesis (signal peptide cleavage). This protein specifically catalyzes the removal of signal peptides from prolipoproteins. In Neisseria meningitidis serogroup A / serotype 4A (strain DSM 15465 / Z2491), this protein is Lipoprotein signal peptidase.